A 479-amino-acid chain; its full sequence is 3-isopropylmalate dehydratase large subunit (479 aa).

The [4Fe-4S] cluster site is built by cysteine 350, cysteine 415, and cysteine 418.

It belongs to the aconitase/IPM isomerase family. LeuC type 1 subfamily. In terms of assembly, heterodimer of LeuC and LeuD. Requires [4Fe-4S] cluster as cofactor.

It carries out the reaction (2R,3S)-3-isopropylmalate = (2S)-2-isopropylmalate. Its pathway is amino-acid biosynthesis; L-leucine biosynthesis; L-leucine from 3-methyl-2-oxobutanoate: step 2/4. In terms of biological role, catalyzes the isomerization between 2-isopropylmalate and 3-isopropylmalate, via the formation of 2-isopropylmaleate. This chain is 3-isopropylmalate dehydratase large subunit, found in Caulobacter vibrioides (strain ATCC 19089 / CIP 103742 / CB 15) (Caulobacter crescentus).